Here is a 150-residue protein sequence, read N- to C-terminus: Glycine cleavage system H-like protein gcvH2 (150 aa).

The 83-residue stretch at 44–126 (VATVGLSSFG…PANNWMVKFK (83 aa)) folds into the Lipoyl-binding domain.

This sequence belongs to the GcvH family.

The protein is Glycine cleavage system H-like protein gcvH2 (gcvH2) of Dictyostelium discoideum (Social amoeba).